We begin with the raw amino-acid sequence, 605 residues long: Pescadillo homolog (605 aa).

The interval 51 to 484 (KANKGSTAPT…GEEEESESES (434 aa)) is sufficient for interaction with ERB1. Position 288 is a phosphoserine (Ser288). Positions 294–342 (LKSALNADEANTDETEKEEEQEKKQEKEQEKEQNEETELDTFEDNNKNK) form a coiled coil. A disordered region spans residues 297–342 (ALNADEANTDETEKEEEQEKKQEKEQEKEQNEETELDTFEDNNKNK). Over residues 303–312 (ANTDETEKEE) the composition is skewed to acidic residues. Thr308 is modified (phosphothreonine). Positions 313 to 327 (EQEKKQEKEQEKEQN) are enriched in basic and acidic residues. The 95-residue stretch at 355-449 (PVASLFSAFV…ELVPANKYLP (95 aa)) folds into the BRCT domain. A disordered region spans residues 459–605 (PWGDAIGYDP…AKLNKLDSKK (147 aa)). Residues 473 to 510 (EEGEEEESESESESEDQVEEEDQEVVAGEEDDDDDEEL) are compositionally biased toward acidic residues. Residues 530-605 (EADKDVNKSK…AKLNKLDSKK (76 aa)) adopt a coiled-coil conformation. Over residues 562 to 571 (KQKKLYKKMK) the composition is skewed to basic residues. Positions 575–584 (AKKEEQAENL) are enriched in basic and acidic residues. Residues 585–598 (KKKKKQIAKQKAKL) are compositionally biased toward basic residues.

This sequence belongs to the pescadillo family. In terms of assembly, component of the NOP7 complex, composed of ERB1, NOP7 and YTM1. The complex is held together by ERB1, which interacts with NOP7 via its N-terminal domain and with YTM1 via a high-affinity interaction between the seven-bladed beta-propeller domains of the 2 proteins. The NOP7 complex associates with the 66S pre-ribosome.

It localises to the nucleus. It is found in the nucleolus. Its subcellular location is the nucleoplasm. Functionally, component of the NOP7 complex, which is required for maturation of the 25S and 5.8S ribosomal RNAs and formation of the 60S ribosome. The protein is Pescadillo homolog of Saccharomyces cerevisiae (strain YJM789) (Baker's yeast).